The primary structure comprises 869 residues: H(+)/Cl(-) exchange transporter 6 (869 aa).

Residues 1–80 (MAGCRGSLCC…KKGRRYEAVK (80 aa)) are Cytoplasmic-facing. 2 helical membrane passes run 81–113 (WMVVFAIGVCTGLVGLFVDFFVRLFTQLKFGVV) and 128–150 (LSLLELLGFNLTFVFLASLLVLI). The Selectivity filter part_1 signature appears at 156 to 160 (GSGIP). Ser-157 is a chloride binding site. Residues 159 to 166 (IPEVKCYL) constitute an intramembrane region (helical). Helical transmembrane passes span 176–194 (RLRTLLCKVLGVLFSVAGG) and 200–217 (EGPMIHSGSVVGAGLPQF). The Selectivity filter part_2 signature appears at 198-202 (EKEGP). 2 intramembrane regions (helical) span residues 241–253 (FVSAGAAAGVAAA) and 257–265 (PIGGTLFSL). Helical transmembrane passes span 277–294 (TWKVLFCSMSATFTLNFF), 335–364 (GFFVVMGVIGGLLGATFNCLNKRLAKYRMR), and 371–392 (KLVRVLESLLVSLVTTVVVFVA). N-linked (GlcNAc...) asparagine glycosylation is found at Asn-410, Asn-422, and Asn-432. Transmembrane regions (helical) follow at residues 462–481 (PVTLALFFVLYFLLACWTYG) and 487–511 (GLFVPSLLCGAAFGRLVANVLKSYI). The Selectivity filter part_3 signature appears at 487-491 (GLFVP). Phe-489 is a binding site for chloride. The segment at residues 519 to 533 (GTFALIGAAAFLGGV) is an intramembrane region (helical). The segment at residues 534-536 (VRM) is an intramembrane region (note=Loop between two helices). Positions 537–548 (TISLTVILIEST) form an intramembrane region, helical. The note=Loop between two helices intramembrane region spans 549–552 (NEIT). The chain crosses the membrane as a helical span at residues 553–571 (YGLPIMVTLMVAKWTGDFF). Residues 572–869 (NKGIYDIHVG…ARLRQHYQTI (298 aa)) are Cytoplasmic-facing. Tyr-576 serves as a coordination point for chloride. In terms of domain architecture, CBS 1 spans 605–662 (MEPNLTYVYPHTRIQSLVSILRTTVHHAFPVVTENRGNEKEFMKGNQLISNNIKFKKS). 630–632 (HHA) provides a ligand contact to ATP. Ser-773 carries the phosphoserine modification. Positions 807 to 868 (MNPSPFTVSP…QARLRQHYQT (62 aa)) constitute a CBS 2 domain. Residue 849–852 (TRHN) participates in ATP binding.

This sequence belongs to the chloride channel (TC 2.A.49) family. ClC-6/CLCN6 subfamily. Post-translationally, N-glycosylated on several asparagine residues. In terms of tissue distribution, testis, ovary, small intestine, brain and skeletal muscle. Low level expression in aortic and coronary vascular smooth muscle cells, and aortic endothelial cells. Isoform 3 is only detected in kidney.

The protein localises to the late endosome membrane. The catalysed reaction is 2 chloride(in) + H(+)(out) = 2 chloride(out) + H(+)(in). Voltage-gated channel mediating the exchange of chloride ions against protons. Functions as antiporter and contributes to the acidification of the late endosome lumen. The CLC channel family contains both chloride channels and proton-coupled anion transporters that exchange chloride or another anion for protons. The presence of conserved gating glutamate residues is typical for family members that function as antiporters. The chain is H(+)/Cl(-) exchange transporter 6 from Homo sapiens (Human).